The following is an 89-amino-acid chain: Small ribosomal subunit protein uS15 (89 aa).

Belongs to the universal ribosomal protein uS15 family. In terms of assembly, part of the 30S ribosomal subunit. Forms a bridge to the 50S subunit in the 70S ribosome, contacting the 23S rRNA.

One of the primary rRNA binding proteins, it binds directly to 16S rRNA where it helps nucleate assembly of the platform of the 30S subunit by binding and bridging several RNA helices of the 16S rRNA. In terms of biological role, forms an intersubunit bridge (bridge B4) with the 23S rRNA of the 50S subunit in the ribosome. This is Small ribosomal subunit protein uS15 from Shewanella sp. (strain ANA-3).